Consider the following 654-residue polypeptide: Pentatricopeptide repeat-containing protein At5g61400 (654 aa).

16 PPR repeats span residues 37-71 (SSFS…RVSK), 74-104 (DLQS…LIER), 131-161 (SIGV…MKCS), 163-197 (DSKA…GLVP), 198-232 (DVHI…GIKP), 233-267 (NVYI…GVLP), 268-302 (NLYT…ELLP), 303-337 (NVVV…GVDP), 338-372 (NLYV…NLSP), 373-407 (DVFT…RIFP), 408-442 (SSAT…GVEP), 443-477 (NIIT…GIVP), 478-512 (DVVT…GIHP), 513-543 (NDHT…NNQQ), 548-582 (NHVG…GITP), and 583-617 (DICS…GILP).

This sequence belongs to the PPR family. P subfamily.

The chain is Pentatricopeptide repeat-containing protein At5g61400 from Arabidopsis thaliana (Mouse-ear cress).